We begin with the raw amino-acid sequence, 35 residues long: Natriuretic peptide TNPb (35 aa).

An intrachain disulfide couples C9 to C25.

In terms of tissue distribution, expressed by the venom gland.

Its subcellular location is the secreted. In terms of biological role, snake venom natriuretic peptide that exhibits vasoactive and probable hypotensive activity. Is only weakly active on natriuretic peptide receptor-C (NPR3). Stimulates cGMP production through the natriuretic peptide receptor 1 (NPR1) with moderate potencies for the rat NPR1 (EC(50)=1200 nM), and very weak potencies over human NPR1 (30% activation at 10 uM). In vivo, does not impact systolic and diastolic blood pressure, as well as heart rate, when intravenously injected in conscious rabbits. Does not affect the bradycardia due to cardiac afferent stimulation (Bezold-Jarisch reflex). The protein is Natriuretic peptide TNPb of Oxyuranus microlepidotus (Inland taipan).